Here is a 216-residue protein sequence, read N- to C-terminus: MQSHLAPLACAAAAGRAGGSCQAAQPEDRRVLRYPGTAVMVTCPNRPLVPRPLLTPGGSRASLALCAFVAVPQRIPQPLLPAYILLMLPSLVVDMALPSSRLLRSIKPIQPASQVVRKERNPNPNCPQSDPLMKASSTSFLSHTYLINKTRSTTRKVEEHSWFTCTGAKYFAIPLAERNTKRLTKRSTHAQLLRGKQDGSEWVVPRSSASSNVLYH.

The N-terminal stretch at 1–23 is a signal peptide; sequence MQSHLAPLACAAAAGRAGGSCQA. A glycan (N-linked (GlcNAc...) asparagine) is linked at asparagine 148.

As to expression, ubiquitously expressed with higher expression in heart.

Its subcellular location is the secreted. The polypeptide is Putative cat eye syndrome critical region protein 9 (CECR9) (Homo sapiens (Human)).